A 397-amino-acid polypeptide reads, in one-letter code: ATP-dependent RNA helicase eIF4A (397 aa).

Positions 24-52 (DSFDDMNLKSELLRGIYAYGFERPSAIQQ) match the Q motif motif. Positions 55 to 225 (IMPVIKGHDV…TKFMRDPVRI (171 aa)) constitute a Helicase ATP-binding domain. 68–75 (AQSGTGKT) lines the ATP pocket. The DEAD box signature appears at 173-176 (DEAD). Residues 236-397 (GIKQFYIAVE…EMPMNVADLI (162 aa)) form the Helicase C-terminal domain.

The protein belongs to the DEAD box helicase family. eIF4A subfamily. In terms of assembly, component of the eIF4F complex, which composition varies with external and internal environmental conditions. It is composed of at least eIF4A, eIF4E and eIF4G.

The protein resides in the cytoplasm. It catalyses the reaction ATP + H2O = ADP + phosphate + H(+). Its function is as follows. ATP-dependent RNA helicase which is a subunit of the eIF4F complex involved in cap recognition and is required for mRNA binding to ribosome. In the current model of translation initiation, eIF4A unwinds RNA secondary structures in the 5'-UTR of mRNAs which is necessary to allow efficient binding of the small ribosomal subunit, and subsequent scanning for the initiator codon. This Chaetomium globosum (strain ATCC 6205 / CBS 148.51 / DSM 1962 / NBRC 6347 / NRRL 1970) (Soil fungus) protein is ATP-dependent RNA helicase eIF4A (TIF1).